The following is a 208-amino-acid chain: N-(5'-phosphoribosyl)anthranilate isomerase (208 aa).

Belongs to the TrpF family.

The enzyme catalyses N-(5-phospho-beta-D-ribosyl)anthranilate = 1-(2-carboxyphenylamino)-1-deoxy-D-ribulose 5-phosphate. It functions in the pathway amino-acid biosynthesis; L-tryptophan biosynthesis; L-tryptophan from chorismate: step 3/5. This is N-(5'-phosphoribosyl)anthranilate isomerase from Dechloromonas aromatica (strain RCB).